Consider the following 203-residue polypeptide: Imidazoleglycerol-phosphate dehydratase (203 aa).

Positions 184-203 (DPRRSSQIPSSKGVLEQAGQ) are disordered.

This sequence belongs to the imidazoleglycerol-phosphate dehydratase family.

Its subcellular location is the cytoplasm. The enzyme catalyses D-erythro-1-(imidazol-4-yl)glycerol 3-phosphate = 3-(imidazol-4-yl)-2-oxopropyl phosphate + H2O. It functions in the pathway amino-acid biosynthesis; L-histidine biosynthesis; L-histidine from 5-phospho-alpha-D-ribose 1-diphosphate: step 6/9. In Prochlorococcus marinus (strain NATL1A), this protein is Imidazoleglycerol-phosphate dehydratase.